We begin with the raw amino-acid sequence, 729 residues long: Polyribonucleotide nucleotidyltransferase (729 aa).

Mg(2+) contacts are provided by aspartate 510 and aspartate 516. The region spanning 576–635 is the KH domain; sequence PRVISVKIPVDKIGEVIGPKGKMINQIQADSGAEITVEDDGTIYIGAADGTSAETARSAI. One can recognise an S1 motif domain in the interval 647–719; it reads GERYLGTIVK…ARGKISLSPS (73 aa).

Belongs to the polyribonucleotide nucleotidyltransferase family. The cofactor is Mg(2+).

The protein localises to the cytoplasm. It catalyses the reaction RNA(n+1) + phosphate = RNA(n) + a ribonucleoside 5'-diphosphate. Its function is as follows. Involved in mRNA degradation. Catalyzes the phosphorolysis of single-stranded polyribonucleotides processively in the 3'- to 5'-direction. This is Polyribonucleotide nucleotidyltransferase from Frankia alni (strain DSM 45986 / CECT 9034 / ACN14a).